Here is a 173-residue protein sequence, read N- to C-terminus: Telomerase RNA component interacting RNase (173 aa).

Residues 1–12 (MAARGRRAEPPG) are compositionally biased toward basic and acidic residues. The interval 1-119 (MAARGRRAEP…LSFVGKRRGG (119 aa)) is disordered. Composition is skewed to low complexity over residues 14 to 23 (EAPGPAGSGR) and 43 to 52 (SGSSPVSSGV). Basic and acidic residues predominate over residues 64 to 79 (LFKRKMEEEQRQRQEE). Positions 80–90 (PPPGPQRPDPP) are enriched in pro residues. An N6-acetyllysine modification is found at Lys143.

In terms of assembly, part of the telomerase RNA 3' end complex which contains about 488 proteins.

In terms of biological role, exoribonuclease that is part of the telomerase RNA 3' end processing complex and which has the ability to cleave all four unpaired RNA nucleotides from the 5' end or 3' end with higher efficiency for purine bases. The sequence is that of Telomerase RNA component interacting RNase from Mus musculus (Mouse).